The sequence spans 492 residues: Uridine-cytidine kinase D (492 aa).

The segment at 36 to 56 (PLPKNKKDHDQSIESDSSFTR) is disordered. 117 to 124 (GPVGAGKT) is an ATP binding site. One can recognise a CYTH domain in the interval 290–460 (EPVYVCKAKY…PQTFLYLYFK (171 aa)). Low complexity predominate over residues 468-483 (PNYSKLKPNNTNSKIL). The tract at residues 468–492 (PNYSKLKPNNTNSKILKNNKDKKNL) is disordered.

This sequence belongs to the uridine kinase family.

It catalyses the reaction uridine + ATP = UMP + ADP + H(+). It carries out the reaction cytidine + ATP = CMP + ADP + H(+). It functions in the pathway pyrimidine metabolism; CTP biosynthesis via salvage pathway; CTP from cytidine: step 1/3. Its pathway is pyrimidine metabolism; UMP biosynthesis via salvage pathway; UMP from uridine: step 1/1. In terms of biological role, catalyzes the conversion of uridine into uridine monophosphate and cytidine into cytidine monophosphate in the pyrimidine salvage pathway. The chain is Uridine-cytidine kinase D (udkD) from Dictyostelium discoideum (Social amoeba).